The primary structure comprises 79 residues: ATP synthase subunit c (79 aa).

A run of 2 helical transmembrane segments spans residues 11 to 31 (IAAA…IGIL) and 53 to 73 (FFIV…LSLY).

This sequence belongs to the ATPase C chain family. In terms of assembly, F-type ATPases have 2 components, F(1) - the catalytic core - and F(0) - the membrane proton channel. F(1) has five subunits: alpha(3), beta(3), gamma(1), delta(1), epsilon(1). F(0) has three main subunits: a(1), b(2) and c(10-14). The alpha and beta chains form an alternating ring which encloses part of the gamma chain. F(1) is attached to F(0) by a central stalk formed by the gamma and epsilon chains, while a peripheral stalk is formed by the delta and b chains.

It localises to the cell inner membrane. In terms of biological role, f(1)F(0) ATP synthase produces ATP from ADP in the presence of a proton or sodium gradient. F-type ATPases consist of two structural domains, F(1) containing the extramembraneous catalytic core and F(0) containing the membrane proton channel, linked together by a central stalk and a peripheral stalk. During catalysis, ATP synthesis in the catalytic domain of F(1) is coupled via a rotary mechanism of the central stalk subunits to proton translocation. Key component of the F(0) channel; it plays a direct role in translocation across the membrane. A homomeric c-ring of between 10-14 subunits forms the central stalk rotor element with the F(1) delta and epsilon subunits. This chain is ATP synthase subunit c, found in Blochmanniella floridana.